The sequence spans 448 residues: Methylenetetrahydrofolate--tRNA-(uracil-5-)-methyltransferase TrmFO (448 aa).

An FAD-binding site is contributed by Gly10 to Gly15.

This sequence belongs to the MnmG family. TrmFO subfamily. FAD serves as cofactor.

It localises to the cytoplasm. It carries out the reaction uridine(54) in tRNA + (6R)-5,10-methylene-5,6,7,8-tetrahydrofolate + NADH + H(+) = 5-methyluridine(54) in tRNA + (6S)-5,6,7,8-tetrahydrofolate + NAD(+). The catalysed reaction is uridine(54) in tRNA + (6R)-5,10-methylene-5,6,7,8-tetrahydrofolate + NADPH + H(+) = 5-methyluridine(54) in tRNA + (6S)-5,6,7,8-tetrahydrofolate + NADP(+). Functionally, catalyzes the folate-dependent formation of 5-methyl-uridine at position 54 (M-5-U54) in all tRNAs. The polypeptide is Methylenetetrahydrofolate--tRNA-(uracil-5-)-methyltransferase TrmFO (Lactococcus lactis subsp. cremoris (strain MG1363)).